Reading from the N-terminus, the 191-residue chain is Signal peptidase IB (191 aa).

At 1–7 (MKKEILE) the chain is on the cytoplasmic side. Residues 8 to 28 (WIISIAVAFVILFIVGKFIVT) traverse the membrane as a helical segment. The Extracellular portion of the chain corresponds to 29–191 (PYTIKGESMD…HNFNPENTKN (163 aa)). Catalysis depends on residues Ser-36 and Lys-77.

The protein belongs to the peptidase S26 family.

Its subcellular location is the cell membrane. It carries out the reaction Cleavage of hydrophobic, N-terminal signal or leader sequences from secreted and periplasmic proteins.. Essential for cell viability. In Staphylococcus aureus (strain COL), this protein is Signal peptidase IB (spsB).